The following is a 1403-amino-acid chain: Baculoviral IAP repeat-containing protein 1e (1403 aa).

3 BIR repeats span residues 60-127 (EAKR…CEFL), 159-227 (EEAR…CEFL), and 278-345 (EELR…CVFL). Residues cysteine 315, cysteine 318, histidine 335, and cysteine 342 each coordinate Zn(2+). In terms of domain architecture, NACHT spans 464-759 (SVMCVEGETG…EFLAAVRLTE (296 aa)). 473 to 478 (GSGKTT) is a binding site for ATP.

As to quaternary structure, component of the NLRC4 inflammasome, at least composed of NLRC4, caspase-1 (CASP1) and some NAIP protein. Flagellin binding by NAIP5 triggers assembly of the inflammasome, a huge complex that contains a single NAIP5 chain and multiple copies of NLRC4. In terms of assembly, (Microbial infection) Interacts with S.typhimurium (Salmonella) flagellin. (Microbial infection) Interacts with L.pneumophila flagellin. As to expression, detected in macrophages (at protein level).

Its function is as follows. Sensor component of the NLRC4 inflammasome that specifically recognizes and binds flagellin from pathogenic bacteria such as Legionella or Salmonella. Association of pathogenic bacteria proteins drives in turn drive assembly and activation of the NLRC4 inflammasome, promoting caspase-1 activation, cytokine production and macrophage pyroptosis. The NLRC4 inflammasome is activated as part of the innate immune response to a range of intracellular bacteria. The NLRC4 inflammasome senses Gram-negative bacteria such as L.pneumophila and P.aeruginosa, enteric pathogens S.typhimurium (Salmonella) and S.flexneri. May contribute to prevent motor-neuron apoptosis induced by a variety of signals. This chain is Baculoviral IAP repeat-containing protein 1e, found in Mus musculus (Mouse).